Consider the following 327-residue polypeptide: E3 ubiquitin-protein ligase SINAT4 (327 aa).

Residues 1-27 (METDSMECVSSTGNEIHQNGNGHQSYQ) are disordered. Polar residues predominate over residues 8-27 (CVSSTGNEIHQNGNGHQSYQ). The RING-type zinc finger occupies 64–100 (CPVCTYSMYPPIHQCHNGHTLCSTCKVRVHNRCPTCR). Residues 114–307 (VAESLELPCK…KELKLRVTGK (194 aa)) form an SBD region. The SIAH-type zinc-finger motif lies at 117–177 (SLELPCKFYN…LVAHLRDDHK (61 aa)). Cys-122, Cys-129, His-141, Cys-145, Cys-152, Cys-159, His-171, and His-176 together coordinate Zn(2+).

This sequence belongs to the SINA (Seven in absentia) family. As to quaternary structure, interacts with SINAT6. Interacts with WAV3. Interacts with FREE1. Interacts with ELC/VPS23A.

The protein resides in the endosome. Its subcellular location is the multivesicular body. It is found in the cytoplasmic vesicle. It localises to the autophagosome. It carries out the reaction S-ubiquitinyl-[E2 ubiquitin-conjugating enzyme]-L-cysteine + [acceptor protein]-L-lysine = [E2 ubiquitin-conjugating enzyme]-L-cysteine + N(6)-ubiquitinyl-[acceptor protein]-L-lysine.. It participates in protein modification; protein ubiquitination. E3 ubiquitin-protein ligase that mediates ubiquitination and subsequent proteasomal degradation of target proteins. E3 ubiquitin ligases accept ubiquitin from an E2 ubiquitin-conjugating enzyme in the form of a thioester and then directly transfers the ubiquitin to targeted substrates. It probably triggers the ubiquitin-mediated degradation of different substrates. Modulates directly the ubiquitination and proteasomal-dependent degradation of FREE1, a component of the ESCRT-I complex. Modulates directly the ubiquitination and proteasomal-dependent degradation of ELC/VPS23A, a component of the ESCRT-I complex. The sequence is that of E3 ubiquitin-protein ligase SINAT4 from Arabidopsis thaliana (Mouse-ear cress).